The chain runs to 158 residues: Protein Smg homolog (158 aa).

This sequence belongs to the Smg family.

This chain is Protein Smg homolog, found in Shewanella oneidensis (strain ATCC 700550 / JCM 31522 / CIP 106686 / LMG 19005 / NCIMB 14063 / MR-1).